Reading from the N-terminus, the 796-residue chain is DnaJ homolog subfamily C member 10 (796 aa).

A signal peptide spans 1–33 (MKHSLNTATSSSSVLKRTILYLVLISLAALVYC). The region spanning 36-100 (DYYDLLGVSK…DLRKKYDKYG (65 aa)) is the J domain. One can recognise a Thioredoxin 1 domain in the interval 131–233 (EIITLDRGEF…ERLVNFAMPY (103 aa)). Residues C159 and C162 are joined by a disulfide bond. 2 trxb regions span residues 236-351 (STVT…LPDL) and 349-464 (PDLE…PTNF). Thioredoxin domains are found at residues 455 to 554 (HVIT…IEDL), 558 to 668 (SVVT…ALMY), and 672 to 780 (ASFD…ITKR). C481 and C484 are joined by a disulfide. N-linked (GlcNAc...) asparagine glycosylation occurs at N531. 2 disulfides stabilise this stretch: C589/C592 and C701/C704. The N-linked (GlcNAc...) asparagine glycan is linked to N753. The Prevents secretion from ER motif lies at 793–796 (KDEL).

The protein localises to the endoplasmic reticulum lumen. Functionally, endoplasmic reticulum disulfide reductase involved both in the correct folding of proteins and degradation of misfolded proteins. Required for efficient folding of proteins in the endoplasmic reticulum by catalyzing the removal of non-native disulfide bonds formed during the folding of proteins. Also involved in endoplasmic reticulum-associated degradation (ERAD) by reducing incorrect disulfide bonds in misfolded glycoproteins. The chain is DnaJ homolog subfamily C member 10 (dnajc10) from Xenopus laevis (African clawed frog).